We begin with the raw amino-acid sequence, 436 residues long: Methyl-accepting chemotaxis protein Amb0994 (436 aa).

Residues 1 to 8 are Cytoplasmic-facing; it reads METTLGSY. Residues 9–29 traverse the membrane as a helical segment; it reads ARTLSLGMLVPSAICLLAGTF. A topological domain (periplasmic) is located at residue glycine 30. Residues 31 to 51 traverse the membrane as a helical segment; the sequence is LLGGSSIALWVVIAVSLLGVV. At 52–436 the chain is on the cytoplasmic side; the sequence is GGVKIGGSAR…DGFIARIGGR (385 aa). Positions 180–416 constitute a Methyl-accepting transducer domain; it reads AATELEASSG…QVADAASELS (237 aa). Glutamine 211 bears the Glutamate methyl ester (Gln) mark. Residue glutamate 225 is modified to Glutamate methyl ester (Glu). A required for interaction with MamK and to respond to the magnetic field region spans residues 321–436; sequence TEDITSQVAH…DGFIARIGGR (116 aa).

It belongs to the methyl-accepting chemotaxis (MCP) protein family. Interacts with MamK at cell poles and septa.

Its subcellular location is the cell inner membrane. Functionally, probable methyl-accepting taxis protein. May be the receptor that senses the torque generated from the interaction between the magnetosome dipole moment and the external magnetic field. Overproduction interferes with magnetotaxis, cells respond more slowly to changes in the magnetic field; requires the MamK-interacting C-terminus of the protein. The effect of magnetic sensing is to control flagellar rotation. Its function is as follows. Chemotactic-signal transducers respond to changes in the concentration of attractants and repellents in the environment, transduce a signal from the outside to the inside of the cell, and facilitate sensory adaptation through variation of methylation levels. Attractants increase the level of methylation while repellents decrease the level of methylation. In Paramagnetospirillum magneticum (strain ATCC 700264 / AMB-1) (Magnetospirillum magneticum), this protein is Methyl-accepting chemotaxis protein Amb0994.